Here is a 553-residue protein sequence, read N- to C-terminus: Methyl-coenzyme M reductase II subunit alpha (553 aa).

Gln150 contacts coenzyme F430. Residues Arg228, 259–260 (KH), and Arg273 contribute to the coenzyme B site. His260 carries the post-translational modification Pros-methylhistidine. A 5-methylarginine modification is found at Arg274. Residue Tyr335 coordinates coenzyme M. Gln402 carries the post-translational modification 2-methylglutamine. Tyr446 lines the coenzyme M pocket. The residue at position 447 (Gly447) is a 1-thioglycine. Asp452 is modified ((Z)-2,3-didehydroaspartate). Cys454 bears the S-methylcysteine mark.

This sequence belongs to the methyl-coenzyme M reductase alpha subunit family. As to quaternary structure, MCR is a hexamer of two alpha, two beta, and two gamma chains, forming a dimer of heterotrimers. Coenzyme F430 is required as a cofactor. Post-translationally, the alpha subunit contains six modified amino acids near the active site region. Is methylated on His-260, Arg-274, Gln-402 and Cys-454, probably by the action of specific S-adenosylmethionine-dependent methyltransferases. Also contains a thioglycine at position 447, forming a thiopeptide bond. Contains a didehydroaspartate residue at position 452. The methylation on C5 of Arg-274 is a post-translational methylation not essential in vivo, but which plays a role for the stability and structural integrity of MCR.

The catalysed reaction is coenzyme B + methyl-coenzyme M = methane + coenzyme M-coenzyme B heterodisulfide. It participates in one-carbon metabolism; methyl-coenzyme M reduction; methane from methyl-coenzyme M: step 1/1. In terms of biological role, component of the methyl-coenzyme M reductase (MCR) I that catalyzes the reductive cleavage of methyl-coenzyme M (CoM-S-CH3 or 2-(methylthio)ethanesulfonate) using coenzyme B (CoB or 7-mercaptoheptanoylthreonine phosphate) as reductant which results in the production of methane and the mixed heterodisulfide of CoB and CoM (CoM-S-S-CoB). This is the final step in methanogenesis. This chain is Methyl-coenzyme M reductase II subunit alpha (mrtA), found in Methanothermobacter thermautotrophicus (strain ATCC 29096 / DSM 1053 / JCM 10044 / NBRC 100330 / Delta H) (Methanobacterium thermoautotrophicum).